A 470-amino-acid polypeptide reads, in one-letter code: MTPFMTEDFLLDTEFARRLYHEYAKDQPIFDYHCHLPPQQIAEDYRFKNLYDIWLKGDHYKWRAMRTNGVAERLCTGDASDREKFDAWAATVPHTIGNPLYHWTHLELRRPFGITGKLLSPSTADEIWNQCNELLAQDNFSARGIMQQMNVKMVGTTDDPIDSLEHHAEIAKDGSFTIKVLPSWRPDKAFNIEQATFNDYMAKLGEVSDTDIRRFADLQTALTKRLDHFAAHGCKVSDHALDVVMFAEANEAELDSILARRLAGETLSEHEVAQFKTAVLVFLGAEYARRGWVQQYHIGALRNNNLRQFKLLGPDVGFDSINDRPMAEELSKLLSKQNEENLLPKTILYCLNPRDNEVLGTMIGNFQGEGMPGKMQFGSGWWFNDQKDGMERQMTQLAQLGLLSRFVGMLTDSRSFLSYTRHEYFRRILCQMIGRWVEAGEAPADINLLGEMVKNICFNNARDYFAIELN.

The protein belongs to the metallo-dependent hydrolases superfamily. Uronate isomerase family.

It catalyses the reaction D-glucuronate = D-fructuronate. The enzyme catalyses aldehydo-D-galacturonate = keto-D-tagaturonate. The protein operates within carbohydrate metabolism; pentose and glucuronate interconversion. This Escherichia fergusonii (strain ATCC 35469 / DSM 13698 / CCUG 18766 / IAM 14443 / JCM 21226 / LMG 7866 / NBRC 102419 / NCTC 12128 / CDC 0568-73) protein is Uronate isomerase.